The primary structure comprises 468 residues: MSRSNAHLNPLECTQQALHWIHSDTLSPDDMAALNQEVLSCFREYVNPGFLEYRKSVTTGGDYGAVEWRASGPNTLIDTQGNEYLDCLGGYGIFNVGHRNPNVIAAVESQLARQPLHSQELLDPLRGLLAKTLAALTPGNLKYSFFSNSGTESVEAALKLAKAYQSPRGKYTFIAATGAFHGKSLGALSATAKPAFRRPFMPLLPGFHHVAFGDISAMRKQVQQCQKTGDDVAAIILEPIQGEGGVIVPPENYLPAVRALCDEVGALLILDEVQTGMGRTGKMFACEHYGVQPDILCLAKALGGGVMPIGATVATEAVFSVLFENPFLHTTTFGGNPLACAAALATVNELLTKNLPEQAAIQGEFLLQGLQQLAAEYPQLIIEARGMGLLQAIEFRKNEIGYAFAKELFQRNILVAGTLNNSKSVRIEPPLTITREQCARVLKEAKDVLKKLNGTMPDENKMKEYAVE.

Pyridoxal 5'-phosphate-binding positions include 150-151 (GT) and glutamine 274. Lysine 300 carries the post-translational modification N6-(pyridoxal phosphate)lysine. Pyridoxal 5'-phosphate is bound at residue threonine 332.

It belongs to the class-III pyridoxal-phosphate-dependent aminotransferase family. Putrescine aminotransferase subfamily. It depends on pyridoxal 5'-phosphate as a cofactor.

It catalyses the reaction an alkane-alpha,omega-diamine + 2-oxoglutarate = an omega-aminoaldehyde + L-glutamate. The enzyme catalyses putrescine + 2-oxoglutarate = 1-pyrroline + L-glutamate + H2O. It carries out the reaction cadaverine + 2-oxoglutarate = 5-aminopentanal + L-glutamate. Its pathway is amine and polyamine degradation; putrescine degradation; 4-aminobutanal from putrescine (transaminase route): step 1/1. Its function is as follows. Catalyzes the aminotransferase reaction from putrescine to 2-oxoglutarate, leading to glutamate and 4-aminobutanal, which spontaneously cyclizes to form 1-pyrroline. This is the first step in one of two pathways for putrescine degradation, where putrescine is converted into 4-aminobutanoate (gamma-aminobutyrate or GABA) via 4-aminobutanal. Also functions as a cadaverine transaminase in a a L-lysine degradation pathway to succinate that proceeds via cadaverine, glutarate and L-2-hydroxyglutarate. The chain is Putrescine aminotransferase from Pectobacterium atrosepticum (strain SCRI 1043 / ATCC BAA-672) (Erwinia carotovora subsp. atroseptica).